Here is a 281-residue protein sequence, read N- to C-terminus: Protein phosphatase 2C homolog 1 (281 aa).

Residues 20 to 281 (RVGVAENKNS…DNVTVMVVFL (262 aa)) enclose the PPM-type phosphatase domain. Mn(2+) is bound by residues D58, G59, D233, and D272.

This sequence belongs to the PP2C family. In terms of assembly, interacts with NBP2 and PBS2. Mg(2+) is required as a cofactor. The cofactor is Mn(2+).

It localises to the peroxisome. The enzyme catalyses O-phospho-L-seryl-[protein] + H2O = L-seryl-[protein] + phosphate. The catalysed reaction is O-phospho-L-threonyl-[protein] + H2O = L-threonyl-[protein] + phosphate. Serine and threonine phosphatase. Involved in tRNA splicing and cell separation. The protein is Protein phosphatase 2C homolog 1 (PTC1) of Saccharomyces cerevisiae (strain ATCC 204508 / S288c) (Baker's yeast).